The chain runs to 155 residues: Pathogenesis-related protein STH-21 (155 aa).

It belongs to the BetVI family.

This Solanum tuberosum (Potato) protein is Pathogenesis-related protein STH-21 (STH-21).